The sequence spans 337 residues: uncharacterized protein (337 aa).

In terms of domain architecture, ABC transporter spans 5–235; that stretch reads VEFDNVSRLY…PRTPFVAGFV (231 aa). 37 to 44 contacts ATP; sequence GPSGSGKT.

The protein belongs to the ABC transporter superfamily.

In terms of biological role, probably part of the ABC transporter complex YdcSTUV. Probably responsible for energy coupling to the transport system. This is an uncharacterized protein from Escherichia coli (strain K12).